A 606-amino-acid chain; its full sequence is Elongation factor 4 (606 aa).

The 183-residue stretch at 7–189 (SRIRNFCIIA…AVVDRVPPPK (183 aa)) folds into the tr-type G domain. Residues 19 to 24 (DHGKST) and 136 to 139 (NKID) each bind GTP.

The protein belongs to the TRAFAC class translation factor GTPase superfamily. Classic translation factor GTPase family. LepA subfamily.

The protein resides in the cell inner membrane. The enzyme catalyses GTP + H2O = GDP + phosphate + H(+). Functionally, required for accurate and efficient protein synthesis under certain stress conditions. May act as a fidelity factor of the translation reaction, by catalyzing a one-codon backward translocation of tRNAs on improperly translocated ribosomes. Back-translocation proceeds from a post-translocation (POST) complex to a pre-translocation (PRE) complex, thus giving elongation factor G a second chance to translocate the tRNAs correctly. Binds to ribosomes in a GTP-dependent manner. This is Elongation factor 4 from Synechococcus sp. (strain CC9605).